The following is a 649-amino-acid chain: Putative calpain-like cysteine protease A (649 aa).

The propeptide occupies 1-3 (MLT). Disordered regions lie at residues 1-22 (MLTTESPTTTTTTTTTTTSSPS) and 124-193 (PLSN…SMPA). Residues 15 to 123 (TTTTSSPSSD…LHANGEAKWY (109 aa)) form the C2 domain. The segment covering 140–149 (ITNSNNKDNN) has biased composition (low complexity). Residues 159–172 (AQEKGDEDQHHSAD) show a composition bias toward basic and acidic residues. 2 domain III regions span residues 458–489 (EGTYIVIPSTYDHGIEGAFHLTLFTDDKNATF) and 498–633 (EVEQ…ISLD).

Belongs to the peptidase C2 family. In terms of assembly, monomer. In terms of processing, undergoes autolytic cleavage between Pro-192 and Ala-193.

The protein resides in the cytoplasm. Its subcellular location is the cytosol. Its function is as follows. Has a weak caseinolytic activity. This chain is Putative calpain-like cysteine protease A (cplA), found in Dictyostelium discoideum (Social amoeba).